The primary structure comprises 150 residues: Large ribosomal subunit protein bL9 (150 aa).

This sequence belongs to the bacterial ribosomal protein bL9 family.

Its function is as follows. Binds to the 23S rRNA. This Herminiimonas arsenicoxydans protein is Large ribosomal subunit protein bL9.